A 625-amino-acid chain; its full sequence is DNA mismatch repair protein MutL (625 aa).

It belongs to the DNA mismatch repair MutL/HexB family.

This protein is involved in the repair of mismatches in DNA. It is required for dam-dependent methyl-directed DNA mismatch repair. May act as a 'molecular matchmaker', a protein that promotes the formation of a stable complex between two or more DNA-binding proteins in an ATP-dependent manner without itself being part of a final effector complex. The protein is DNA mismatch repair protein MutL of Bacteroides fragilis (strain YCH46).